Consider the following 303-residue polypeptide: Tyrosine-protein phosphatase 3 (303 aa).

Positions Y24–L292 constitute a Tyrosine-protein phosphatase domain. Residue C227 is the Phosphocysteine intermediate of the active site.

It belongs to the protein-tyrosine phosphatase family. Non-receptor class subfamily.

The protein resides in the cytoplasm. It carries out the reaction O-phospho-L-tyrosyl-[protein] + H2O = L-tyrosyl-[protein] + phosphate. Its function is as follows. Contributes to dephosphorylation of tyrosine 15 of cdc2. The sequence is that of Tyrosine-protein phosphatase 3 (pyp3) from Schizosaccharomyces pombe (strain 972 / ATCC 24843) (Fission yeast).